A 342-amino-acid chain; its full sequence is Cytosolic Fe-S cluster assembly factor NBP35 (342 aa).

Residues 1-45 form a disordered region; it reads MGPSLETPEPVEDVLANPLKQKPQLVAPEPEHCPGPESEQAGTAD. Positions 33, 47, 50, and 56 each coordinate [4Fe-4S] cluster. Residue 86–93 coordinates ATP; that stretch reads GKGGVGKS. [4Fe-4S] cluster contacts are provided by Cys-259 and Cys-262.

This sequence belongs to the Mrp/NBP35 ATP-binding proteins family. NUBP1/NBP35 subfamily. In terms of assembly, heterotetramer of 2 NBP35 and 2 CFD1 chains. [4Fe-4S] cluster is required as a cofactor.

The protein localises to the cytoplasm. Functionally, component of the cytosolic iron-sulfur (Fe/S) protein assembly (CIA) machinery. Required for maturation of extramitochondrial Fe-S proteins. The NBP35-CFD1 heterotetramer forms a Fe-S scaffold complex, mediating the de novo assembly of an Fe-S cluster and its transfer to target apoproteins. In Chaetomium globosum (strain ATCC 6205 / CBS 148.51 / DSM 1962 / NBRC 6347 / NRRL 1970) (Soil fungus), this protein is Cytosolic Fe-S cluster assembly factor NBP35.